The sequence spans 376 residues: N-acetyldiaminopimelate deacetylase (376 aa).

Asp-69 is an active-site residue. Residue Glu-128 is the Proton acceptor of the active site.

This sequence belongs to the peptidase M20A family. N-acetyldiaminopimelate deacetylase subfamily.

It catalyses the reaction N-acetyl-(2S,6S)-2,6-diaminopimelate + H2O = (2S,6S)-2,6-diaminopimelate + acetate. It participates in amino-acid biosynthesis; L-lysine biosynthesis via DAP pathway; LL-2,6-diaminopimelate from (S)-tetrahydrodipicolinate (acetylase route): step 3/3. Catalyzes the conversion of N-acetyl-diaminopimelate to diaminopimelate and acetate. This is N-acetyldiaminopimelate deacetylase from Bacillus cereus (strain ATCC 14579 / DSM 31 / CCUG 7414 / JCM 2152 / NBRC 15305 / NCIMB 9373 / NCTC 2599 / NRRL B-3711).